The primary structure comprises 100 residues: Large ribosomal subunit protein uL23 (100 aa).

Belongs to the universal ribosomal protein uL23 family. In terms of assembly, part of the 50S ribosomal subunit. Contacts protein L29, and trigger factor when it is bound to the ribosome.

Functionally, one of the early assembly proteins it binds 23S rRNA. One of the proteins that surrounds the polypeptide exit tunnel on the outside of the ribosome. Forms the main docking site for trigger factor binding to the ribosome. In Corynebacterium aurimucosum (strain ATCC 700975 / DSM 44827 / CIP 107346 / CN-1) (Corynebacterium nigricans), this protein is Large ribosomal subunit protein uL23.